Consider the following 339-residue polypeptide: tRNA (cytidine(56)-2'-O)-methyltransferase (339 aa).

S-adenosyl-L-methionine is bound by residues leucine 79 and 105-109; that span reads GSEKV. Residues 188–295 enclose the HD domain; it reads LIEHVKAVEG…VAQADNLFAG (108 aa).

The protein belongs to the aTrm56 family. Homodimer.

The protein localises to the cytoplasm. It catalyses the reaction cytidine(56) in tRNA + S-adenosyl-L-methionine = 2'-O-methylcytidine(56) in tRNA + S-adenosyl-L-homocysteine + H(+). Its function is as follows. Specifically catalyzes the AdoMet-dependent 2'-O-ribose methylation of cytidine at position 56 in tRNAs. The polypeptide is tRNA (cytidine(56)-2'-O)-methyltransferase (Thermoplasma acidophilum (strain ATCC 25905 / DSM 1728 / JCM 9062 / NBRC 15155 / AMRC-C165)).